Reading from the N-terminus, the 322-residue chain is D-specific alpha-keto acid dehydrogenase (322 aa).

Residues Gln156–Ile157, Thr229–Arg231, and Asp255 contribute to the NAD(+) site. Arg231 is a catalytic residue. The active site involves Glu260. The Proton donor role is filled by His292. His292–Tyr295 contributes to the NAD(+) binding site.

The protein belongs to the D-isomer specific 2-hydroxyacid dehydrogenase family.

The catalysed reaction is a (2R)-2-hydroxycarboxylate + NADP(+) = a 2-oxocarboxylate + NADPH + H(+). It catalyses the reaction a (2R)-2-hydroxycarboxylate + NAD(+) = a 2-oxocarboxylate + NADH + H(+). It carries out the reaction (R)-lactate + NADP(+) = pyruvate + NADPH + H(+). The enzyme catalyses (R)-lactate + NAD(+) = pyruvate + NADH + H(+). The catalysed reaction is (2R)-hydroxybutanoate + NADP(+) = 2-oxobutanoate + NADPH + H(+). Its function is as follows. Required for high-level resistance to glycopeptide antibiotics. Catalyzes the reduction of 2-keto acids to 2-D-hydroxy acids, exhibiting highest catalytic efficiency with pyruvate and 2-oxobutanoate/alpha-ketobutyrate as substrates, producing D-lactate and (2R)-hydroxybutanoate, respectively. Together with D-alanine--D-lactate ligase VanA, gives rise to peptidoglycan precursors that terminate in the depsipeptide D-alanine-D-lactate rather than the dipeptide D-alanine-D-alanine thus preventing vancomycin binding. Shows a slight preference for NADPH over NADH as the electron donor. The sequence is that of D-specific alpha-keto acid dehydrogenase from Enterococcus faecium (Streptococcus faecium).